Reading from the N-terminus, the 505-residue chain is Alpha-1-syntrophin (505 aa).

Disordered stretches follow at residues 1–25 (MASG…GAGG) and 40–77 (LTVS…PPQL). PH domains follow at residues 6–269 (RAPR…AQVN) and 293–401 (DIKQ…DGCH). A PDZ domain is found at 87-170 (RVTVRKADAG…EVVLEVKYMK (84 aa)). Phosphoserine is present on residues S101, S184, S189, S193, and S200. Positions 180–210 (TGGTSVGWDSPPASPLQRQPSSPGPTPRNFS) are disordered. In terms of domain architecture, SU spans 449–505 (PFEKLQMSSDDGASLLFLDFGGAEGEIQLDLHSCPKTIVFIIHSFLSAKVTRLGLLA). Positions 483–505 (PKTIVFIIHSFLSAKVTRLGLLA) are calmodulin-binding.

It belongs to the syntrophin family. Monomer and homodimer. Interacts with the other members of the syntrophin family SNTB1 and SNTB2; SGCG and SGCA of the dystrophin glycoprotein complex; NOS1; GRB2; the sodium channel proteins SCN4A and SCN5A; F-actin and calmodulin. Interacts with dystrophin protein DMD and related proteins DTNA and UTRN and with MAPK12, TGFA and GA. Interacts with MYOC; regulates muscle hypertrophy. Interacts with DTNB. In terms of processing, phosphorylated by CaM-kinase II. Phosphorylation may inhibit the interaction with DMD. High expression in skeletal muscle and heart. Low expression in brain, pancreas, liver, kidney and lung. Not detected in placenta.

The protein localises to the cell membrane. Its subcellular location is the sarcolemma. The protein resides in the cell junction. It localises to the cytoplasm. It is found in the cytoskeleton. In terms of biological role, adapter protein that binds to and probably organizes the subcellular localization of a variety of membrane proteins. May link various receptors to the actin cytoskeleton and the extracellular matrix via the dystrophin glycoprotein complex. Plays an important role in synapse formation and in the organization of UTRN and acetylcholine receptors at the neuromuscular synapse. Binds to phosphatidylinositol 4,5-bisphosphate. The sequence is that of Alpha-1-syntrophin (SNTA1) from Homo sapiens (Human).